We begin with the raw amino-acid sequence, 352 residues long: Anthranilate phosphoribosyltransferase (352 aa).

Residues Gly-91, 94–95 (GD), Thr-99, 101–104 (NIST), 119–127 (KHGNRASSS), and Ser-131 each bind 5-phospho-alpha-D-ribose 1-diphosphate. An anthranilate-binding site is contributed by Gly-91. Mg(2+) is bound at residue Ser-103. Asn-122 is a binding site for anthranilate. Arg-177 is an anthranilate binding site. Asp-235 and Glu-236 together coordinate Mg(2+).

Belongs to the anthranilate phosphoribosyltransferase family. As to quaternary structure, homodimer. Mg(2+) serves as cofactor.

The catalysed reaction is N-(5-phospho-beta-D-ribosyl)anthranilate + diphosphate = 5-phospho-alpha-D-ribose 1-diphosphate + anthranilate. The protein operates within amino-acid biosynthesis; L-tryptophan biosynthesis; L-tryptophan from chorismate: step 2/5. Its function is as follows. Catalyzes the transfer of the phosphoribosyl group of 5-phosphorylribose-1-pyrophosphate (PRPP) to anthranilate to yield N-(5'-phosphoribosyl)-anthranilate (PRA). This Arthrobacter sp. (strain FB24) protein is Anthranilate phosphoribosyltransferase.